Reading from the N-terminus, the 400-residue chain is Argininosuccinate synthase (400 aa).

10–18 (AYSGGVDTS) contributes to the ATP binding site. Y89 lines the L-citrulline pocket. ATP is bound at residue G119. L-aspartate contacts are provided by T121, N125, and D126. Residue N125 coordinates L-citrulline. L-citrulline contacts are provided by R129, S177, S186, E262, and Y274.

This sequence belongs to the argininosuccinate synthase family. Type 1 subfamily. As to quaternary structure, homotetramer.

The protein localises to the cytoplasm. It catalyses the reaction L-citrulline + L-aspartate + ATP = 2-(N(omega)-L-arginino)succinate + AMP + diphosphate + H(+). Its pathway is amino-acid biosynthesis; L-arginine biosynthesis; L-arginine from L-ornithine and carbamoyl phosphate: step 2/3. The protein is Argininosuccinate synthase of Synechococcus sp. (strain JA-2-3B'a(2-13)) (Cyanobacteria bacterium Yellowstone B-Prime).